Here is a 217-residue protein sequence, read N- to C-terminus: Glutathione S-transferase 1 (217 aa).

In terms of domain architecture, GST N-terminal spans 1–83 (MVMTLYKLDA…YLVSKYGADD (83 aa)). Residues S11, 53–55 (HTV), and 67–69 (DSH) each bind glutathione. In terms of domain architecture, GST C-terminal spans 89-211 (DPKKRAIVDQ…APGNDLCKDL (123 aa)).

It belongs to the GST superfamily. Theta family. As to quaternary structure, homodimer.

It carries out the reaction RX + glutathione = an S-substituted glutathione + a halide anion + H(+). Functionally, conjugation of reduced glutathione to a wide number of exogenous and endogenous hydrophobic electrophiles. In Manduca sexta (Tobacco hawkmoth), this protein is Glutathione S-transferase 1 (GST1).